A 78-amino-acid chain; its full sequence is Hainantoxin-XX (78 aa).

The first 23 residues, 1-23, serve as a signal peptide directing secretion; sequence MKSATLLALSFLLIALYFLICEA. The propeptide occupies 24–47; the sequence is EHSRYEEHEILEENMGDVVNLEQR. 3 cysteine pairs are disulfide-bonded: cysteine 49–cysteine 62, cysteine 56–cysteine 66, and cysteine 61–cysteine 77.

This sequence belongs to the hainantoxin family. 20 subfamily. In terms of tissue distribution, expressed by the venom gland.

It is found in the secreted. Its function is as follows. Putative ion channel inhibitor. In Cyriopagopus hainanus (Chinese bird spider), this protein is Hainantoxin-XX.